Consider the following 347-residue polypeptide: Lipoyl synthase (347 aa).

Cys77, Cys82, Cys88, Cys103, Cys107, Cys110, and Ser317 together coordinate [4Fe-4S] cluster. A Radical SAM core domain is found at 89–306; sequence FADGTATFMI…MDYGKKIGFF (218 aa).

Belongs to the radical SAM superfamily. Lipoyl synthase family. [4Fe-4S] cluster is required as a cofactor.

Its subcellular location is the cytoplasm. The catalysed reaction is [[Fe-S] cluster scaffold protein carrying a second [4Fe-4S](2+) cluster] + N(6)-octanoyl-L-lysyl-[protein] + 2 oxidized [2Fe-2S]-[ferredoxin] + 2 S-adenosyl-L-methionine + 4 H(+) = [[Fe-S] cluster scaffold protein] + N(6)-[(R)-dihydrolipoyl]-L-lysyl-[protein] + 4 Fe(3+) + 2 hydrogen sulfide + 2 5'-deoxyadenosine + 2 L-methionine + 2 reduced [2Fe-2S]-[ferredoxin]. It functions in the pathway protein modification; protein lipoylation via endogenous pathway; protein N(6)-(lipoyl)lysine from octanoyl-[acyl-carrier-protein]: step 2/2. Catalyzes the radical-mediated insertion of two sulfur atoms into the C-6 and C-8 positions of the octanoyl moiety bound to the lipoyl domains of lipoate-dependent enzymes, thereby converting the octanoylated domains into lipoylated derivatives. The polypeptide is Lipoyl synthase (Psychrobacter cryohalolentis (strain ATCC BAA-1226 / DSM 17306 / VKM B-2378 / K5)).